The sequence spans 79 residues: Acyl carrier protein (79 aa).

Residues 2 to 77 (SDIAERVKKI…DAVKFLEKNS (76 aa)) form the Carrier domain. S37 carries the post-translational modification O-(pantetheine 4'-phosphoryl)serine.

This sequence belongs to the acyl carrier protein (ACP) family. In terms of processing, 4'-phosphopantetheine is transferred from CoA to a specific serine of apo-ACP by AcpS. This modification is essential for activity because fatty acids are bound in thioester linkage to the sulfhydryl of the prosthetic group.

The protein localises to the cytoplasm. Its pathway is lipid metabolism; fatty acid biosynthesis. Functionally, carrier of the growing fatty acid chain in fatty acid biosynthesis. The chain is Acyl carrier protein from Methylobacterium radiotolerans (strain ATCC 27329 / DSM 1819 / JCM 2831 / NBRC 15690 / NCIMB 10815 / 0-1).